We begin with the raw amino-acid sequence, 187 residues long: MQNSNSFPDWHGTTILAVRKNGSTVIAGDGQVSMGPTVVKGNARKVRRLAGGKVVAGFAGATADAFTLIERLEAKLEQYPDQLARACVDLAKDWRTDRYLRRLEAMLLVADADSIFTVTGVGDVLEPGESTGGGSVAAIGSGGNYALAAAKALIDQDLTAEEIARKAMGIAAEICVYTNGNLTVESL.

The active site involves Thr-13. 3 residues coordinate Na(+): Ala-172, Cys-175, and Thr-178.

The protein belongs to the peptidase T1B family. HslV subfamily. In terms of assembly, a double ring-shaped homohexamer of HslV is capped on each side by a ring-shaped HslU homohexamer. The assembly of the HslU/HslV complex is dependent on binding of ATP.

The protein resides in the cytoplasm. The catalysed reaction is ATP-dependent cleavage of peptide bonds with broad specificity.. Allosterically activated by HslU binding. Protease subunit of a proteasome-like degradation complex believed to be a general protein degrading machinery. The protein is ATP-dependent protease subunit HslV of Caulobacter sp. (strain K31).